The following is a 395-amino-acid chain: Biotin biosynthesis cytochrome P450 (395 aa).

Arg-60 is a binding site for substrate. Residue 89–93 (HRRLR) coordinates heme. 169–173 (IDFTR) provides a ligand contact to substrate. Cys-250 and Cys-275 form a disulfide bridge. 285 to 287 (TAR) lines the heme pocket. Tyr-307 lines the substrate pocket. Residues 343-345 (HVC) and Cys-345 each bind heme.

Heme serves as cofactor.

The catalysed reaction is a C2-C8-saturated long-chain fatty acyl-[ACP] + 2 reduced [flavodoxin] + 3 O2 = 6-carboxyhexanoyl-[ACP] + a fatty aldehyde + 2 oxidized [flavodoxin] + 3 H2O + 3 H(+). It participates in cofactor biosynthesis; biotin biosynthesis. Functionally, catalyzes the C-C bond cleavage of fatty acid linked to acyl carrier protein (ACP) to generate pimelic acid for biotin biosynthesis. It has high affinity for long-chain fatty acids with the greatest affinity for myristic acid. In Bacillus subtilis (strain 168), this protein is Biotin biosynthesis cytochrome P450 (bioI).